We begin with the raw amino-acid sequence, 447 residues long: MAGYEVNFDGLVGLTHHYAGLSFGNEASTTHQNRTSNPRLAAKQGLLKMKALADLGYKQGVLPPQERPAIGVLRKLGFSGSDEQVLSDVARNAPRLLSAVSSASSMWTANAATVSPSADSADGRVHFTVANLHNKFHRAIEAETTAVLLPAVFNNHRHFVHHDALPSVTLLGDEGAANHNRLGGEYDSPAIQMFVYGRQGMESGAVPGRYPARQTREASQAVARLHQLDPKRTVFVQQNPAVIDQGVFHNDVIAVSNRNVLFHHELAFLSSTQVMDDIRCKMAGLEQQLVNIEVPEAEVSVADAVSTYLFNSQLLHKANGKMLLVIPQESQDNPSVWRYLSELVSGDGPIDELRVFDLRESMRNGGGPACLRLRVVLNDAELQAVNSRVMLTPALFVTLNNWVDQHYRDHLQFKDLADPHLLQEGRQALDELTRILNLGPVYPFQRN.

Residues 19 to 28, N110, and 137 to 138 each bind substrate; these read AGLSFGNEAS and HR. E174 is an active-site residue. R213 lines the substrate pocket. H249 is a catalytic residue. Residues D251 and N364 each contribute to the substrate site. Catalysis depends on C370, which acts as the Nucleophile.

Belongs to the succinylarginine dihydrolase family. Homodimer.

The catalysed reaction is N(2)-succinyl-L-arginine + 2 H2O + 2 H(+) = N(2)-succinyl-L-ornithine + 2 NH4(+) + CO2. Its pathway is amino-acid degradation; L-arginine degradation via AST pathway; L-glutamate and succinate from L-arginine: step 2/5. Functionally, catalyzes the hydrolysis of N(2)-succinylarginine into N(2)-succinylornithine, ammonia and CO(2). This is N-succinylarginine dihydrolase from Yersinia pestis bv. Antiqua (strain Antiqua).